The sequence spans 684 residues: ATP-dependent DNA helicase RecG (684 aa).

The interval 51 to 148 is wedge domain; the sequence is RHIASMATLQ…ADVPQFQAPH (98 aa). The Helicase ATP-binding domain maps to 278–439; it reads DLARHRPMRR…VHADLEVSVI (162 aa). Residue 291–298 participates in ATP binding; it reads GDVGSGKT. Residues 392 to 395 carry the DEAH box motif; the sequence is DEQH.

This sequence belongs to the helicase family. RecG subfamily. In terms of assembly, monomer.

It carries out the reaction Couples ATP hydrolysis with the unwinding of duplex DNA by translocating in the 3'-5' direction.. The catalysed reaction is ATP + H2O = ADP + phosphate + H(+). Functionally, plays a critical role in recombination and DNA repair. Helps process Holliday junction intermediates to mature products by catalyzing branch migration. Has replication fork regression activity, unwinds stalled or blocked replication forks to make a HJ that can be resolved. Has a DNA unwinding activity characteristic of a DNA helicase with 3'-5' polarity. This is ATP-dependent DNA helicase RecG from Acidithiobacillus ferridurans.